The primary structure comprises 608 residues: tRNA (guanine(37)-N(1))-methyltransferase 1 (608 aa).

Positions 207–229 are disordered; it reads SRPKKKKRRKEEERSEGKKRTGK. Residues 216–229 are compositionally biased toward basic and acidic residues; sequence KEEERSEGKKRTGK. Residues Arg-425, 463–464, 491–492, and Asn-514 each bind S-adenosyl-L-methionine; these read DL and DG.

This sequence belongs to the class I-like SAM-binding methyltransferase superfamily. TRM5/TYW2 family. In terms of assembly, monomer.

It is found in the mitochondrion matrix. Its subcellular location is the nucleus. It localises to the cytoplasm. It catalyses the reaction guanosine(37) in tRNA + S-adenosyl-L-methionine = N(1)-methylguanosine(37) in tRNA + S-adenosyl-L-homocysteine + H(+). Its function is as follows. Specifically methylates the N1 position of guanosine-37 in various cytoplasmic and mitochondrial tRNAs. Methylation is not dependent on the nature of the nucleoside 5' of the target nucleoside. This is the first step in the biosynthesis of wybutosine (yW), a modified base adjacent to the anticodon of tRNAs and required for accurate decoding. This is tRNA (guanine(37)-N(1))-methyltransferase 1 from Vitis vinifera (Grape).